Here is a 682-residue protein sequence, read N- to C-terminus: DNA ligase (682 aa).

NAD(+)-binding positions include 42–46 (DAEYD), 91–92 (SL), and glutamate 124. Catalysis depends on lysine 126, which acts as the N6-AMP-lysine intermediate. NAD(+)-binding residues include arginine 147, glutamate 184, lysine 302, and lysine 326. Zn(2+) contacts are provided by cysteine 420, cysteine 423, cysteine 438, and cysteine 444. The 80-residue stretch at 603–682 (IADNPLKGKS…QEFIALTGEN (80 aa)) folds into the BRCT domain.

This sequence belongs to the NAD-dependent DNA ligase family. LigA subfamily. Requires Mg(2+) as cofactor. It depends on Mn(2+) as a cofactor.

The catalysed reaction is NAD(+) + (deoxyribonucleotide)n-3'-hydroxyl + 5'-phospho-(deoxyribonucleotide)m = (deoxyribonucleotide)n+m + AMP + beta-nicotinamide D-nucleotide.. DNA ligase that catalyzes the formation of phosphodiester linkages between 5'-phosphoryl and 3'-hydroxyl groups in double-stranded DNA using NAD as a coenzyme and as the energy source for the reaction. It is essential for DNA replication and repair of damaged DNA. In Actinobacillus pleuropneumoniae serotype 7 (strain AP76), this protein is DNA ligase.